A 277-amino-acid chain; its full sequence is Urease accessory protein UreD (277 aa).

The protein belongs to the UreD family. In terms of assembly, ureD, UreF and UreG form a complex that acts as a GTP-hydrolysis-dependent molecular chaperone, activating the urease apoprotein by helping to assemble the nickel containing metallocenter of UreC. The UreE protein probably delivers the nickel.

Its subcellular location is the cytoplasm. In terms of biological role, required for maturation of urease via the functional incorporation of the urease nickel metallocenter. This Pseudomonas putida (strain W619) protein is Urease accessory protein UreD.